A 398-amino-acid polypeptide reads, in one-letter code: Phosphoglycerate kinase (398 aa).

Residues 21-23 (DFN), Arg36, 59-62 (HLGR), Arg119, and Arg157 each bind substrate. ATP contacts are provided by residues Lys208, Gly296, Glu327, and 354 to 357 (GGDS).

It belongs to the phosphoglycerate kinase family. Monomer.

Its subcellular location is the cytoplasm. It carries out the reaction (2R)-3-phosphoglycerate + ATP = (2R)-3-phospho-glyceroyl phosphate + ADP. Its pathway is carbohydrate degradation; glycolysis; pyruvate from D-glyceraldehyde 3-phosphate: step 2/5. This Streptococcus pyogenes serotype M3 (strain ATCC BAA-595 / MGAS315) protein is Phosphoglycerate kinase.